The primary structure comprises 100 residues: NADH-quinone oxidoreductase subunit K (100 aa).

The next 3 helical transmembrane spans lie at 4-24 (YEYY…GIII), 29-49 (IAML…FVAF), and 60-80 (VFVF…LGLI).

It belongs to the complex I subunit 4L family. In terms of assembly, NDH-1 is composed of 14 different subunits. Subunits NuoA, H, J, K, L, M, N constitute the membrane sector of the complex.

Its subcellular location is the cell inner membrane. It catalyses the reaction a quinone + NADH + 5 H(+)(in) = a quinol + NAD(+) + 4 H(+)(out). Its function is as follows. NDH-1 shuttles electrons from NADH, via FMN and iron-sulfur (Fe-S) centers, to quinones in the respiratory chain. The immediate electron acceptor for the enzyme in this species is believed to be ubiquinone. Couples the redox reaction to proton translocation (for every two electrons transferred, four hydrogen ions are translocated across the cytoplasmic membrane), and thus conserves the redox energy in a proton gradient. The sequence is that of NADH-quinone oxidoreductase subunit K from Persephonella marina (strain DSM 14350 / EX-H1).